Here is an 80-residue protein sequence, read N- to C-terminus: CLAVATA3/ESR (CLE)-related protein 40 (80 aa).

Positions Met-1 to Ala-25 are cleaved as a signal peptide. Residues Met-45 to Pro-80 form a disordered region. At Pro-65 the chain carries Hydroxyproline.

It belongs to the CLV3/ESR signal peptide family. In terms of tissue distribution, mostly expressed at low levels in stems and apex, and, to a lower extent, in roots, seedlings, leaves, flowers, siliques and pollen.

It is found in the secreted. It localises to the extracellular space. Its function is as follows. Extracellular signal peptide secreted by differentiated root cells that regulates root cell fate. Acts with ACR4 as a ligand-receptor pair in a signal transduction pathway, coordinating movement of the root tip and organization of cell divisions in the root meristem. Promotes cell differentiation in the distal root meristem in a dose-dependent manner, especially the transition from columella stem cells (CSC) daughters into columella cells (CCs). Induces ACR4 expression in root quiescent center (QC). Involved in WUX5 QC-specific expression pattern regulation. Regulates the transition of protophloem cells from proliferation to differentiation, thus impinging on postembryonic growth capacity of the root meristem; this signaling pathway requires CRN and CLV2. The sequence is that of CLAVATA3/ESR (CLE)-related protein 40 from Arabidopsis thaliana (Mouse-ear cress).